The following is a 153-amino-acid chain: UPF0178 protein CC_1215 (153 aa).

It belongs to the UPF0178 family.

The chain is UPF0178 protein CC_1215 from Caulobacter vibrioides (strain ATCC 19089 / CIP 103742 / CB 15) (Caulobacter crescentus).